Reading from the N-terminus, the 171-residue chain is Endoribonuclease YbeY (171 aa).

Zn(2+) is bound by residues H130, H134, and H140.

This sequence belongs to the endoribonuclease YbeY family. The cofactor is Zn(2+).

The protein localises to the cytoplasm. In terms of biological role, single strand-specific metallo-endoribonuclease involved in late-stage 70S ribosome quality control and in maturation of the 3' terminus of the 16S rRNA. The protein is Endoribonuclease YbeY of Neisseria gonorrhoeae (strain ATCC 700825 / FA 1090).